A 72-amino-acid chain; its full sequence is DNA-directed RNA polymerase subunit omega (72 aa).

It belongs to the RNA polymerase subunit omega family. The RNAP catalytic core consists of 2 alpha, 1 beta, 1 beta' and 1 omega subunit. When a sigma factor is associated with the core the holoenzyme is formed, which can initiate transcription.

The catalysed reaction is RNA(n) + a ribonucleoside 5'-triphosphate = RNA(n+1) + diphosphate. Its function is as follows. Promotes RNA polymerase assembly. Latches the N- and C-terminal regions of the beta' subunit thereby facilitating its interaction with the beta and alpha subunits. The chain is DNA-directed RNA polymerase subunit omega from Clostridium acetobutylicum (strain ATCC 824 / DSM 792 / JCM 1419 / IAM 19013 / LMG 5710 / NBRC 13948 / NRRL B-527 / VKM B-1787 / 2291 / W).